The sequence spans 276 residues: Diaminopimelate epimerase (276 aa).

Residues Asn11, Gln44, and Asn64 each contribute to the substrate site. Catalysis depends on Cys73, which acts as the Proton donor. Substrate contacts are provided by residues Ile74 to Asn75, Asn159, Asn192, and Glu210 to Arg211. The Proton acceptor role is filled by Cys219. A substrate-binding site is contributed by Gly220–Ser221.

The protein belongs to the diaminopimelate epimerase family. As to quaternary structure, homodimer.

The protein resides in the cytoplasm. The enzyme catalyses (2S,6S)-2,6-diaminopimelate = meso-2,6-diaminopimelate. The protein operates within amino-acid biosynthesis; L-lysine biosynthesis via DAP pathway; DL-2,6-diaminopimelate from LL-2,6-diaminopimelate: step 1/1. Functionally, catalyzes the stereoinversion of LL-2,6-diaminopimelate (L,L-DAP) to meso-diaminopimelate (meso-DAP), a precursor of L-lysine and an essential component of the bacterial peptidoglycan. The sequence is that of Diaminopimelate epimerase from Wigglesworthia glossinidia brevipalpis.